A 507-amino-acid chain; its full sequence is Protein DETOXIFICATION 39 (507 aa).

Transmembrane regions (helical) follow at residues 58 to 78, 92 to 112, 141 to 161, 178 to 198, 209 to 229, 233 to 253, 287 to 307, 318 to 338, 359 to 379, 403 to 423, 433 to 453, and 459 to 479; these read VLFR…GMGI, LAAA…MLGM, IVLA…YPIL, IAGL…QKFL, FISA…VYVM, FMGI…SQCF, AVMI…AGLL, SICM…NAAV, WTAT…VIWF, FLAI…VAVG, VNVG…GFTF, and GIWT…LYVT.

The protein belongs to the multi antimicrobial extrusion (MATE) (TC 2.A.66.1) family.

Its subcellular location is the membrane. This Arabidopsis thaliana (Mouse-ear cress) protein is Protein DETOXIFICATION 39.